The primary structure comprises 334 residues: 4-hydroxyproline 2-epimerase (334 aa).

Catalysis depends on Cys-90, which acts as the Proton acceptor. Substrate-binding positions include 91–92, His-223, and Asp-249; that span reads GH. The active-site Proton donor is Cys-253. 254–255 lines the substrate pocket; sequence GT.

The protein belongs to the proline racemase family. Homodimer.

It catalyses the reaction trans-4-hydroxy-L-proline = cis-4-hydroxy-D-proline. Functionally, catalyzes the epimerization of trans-4-hydroxy-L-proline (t4LHyp) to cis-4-hydroxy-D-proline (c4DHyp). Is likely involved in a degradation pathway that converts t4LHyp to alpha-ketoglutarate, which would allow P.denitrificans to grow on t4LHyp as a sole carbon source. Also seems to be involved in an alternative catabolic pathway that degrades trans-4-hydroxy-L-proline betaine (tHyp-B) to alpha-ketoglutarate; this pathway would permit the utilization of tHyp-B as a sole carbon and nitrogen source. This Paracoccus denitrificans (strain Pd 1222) protein is 4-hydroxyproline 2-epimerase (hypF).